The chain runs to 129 residues: Small ribosomal subunit protein uS11 (129 aa).

This sequence belongs to the universal ribosomal protein uS11 family. In terms of assembly, part of the 30S ribosomal subunit. Interacts with proteins S7 and S18. Binds to IF-3.

In terms of biological role, located on the platform of the 30S subunit, it bridges several disparate RNA helices of the 16S rRNA. Forms part of the Shine-Dalgarno cleft in the 70S ribosome. This is Small ribosomal subunit protein uS11 from Psychromonas ingrahamii (strain DSM 17664 / CCUG 51855 / 37).